Here is a 616-residue protein sequence, read N- to C-terminus: 2-isopropylmalate synthase (616 aa).

The disordered stretch occupies residues 1–34 (MSPNDAFISAPAKIETPVGPRNEGQPAWNKQRGS). The region spanning 67–341 (PQWCAVDLRD…DPQLDFTDIR (275 aa)) is the Pyruvate carboxyltransferase domain. 4 residues coordinate Mg(2+): aspartate 76, histidine 280, histidine 282, and asparagine 316. The regulatory domain stretch occupies residues 490–616 (RTAPVEQIAL…NHEAVLAGGV (127 aa)).

Belongs to the alpha-IPM synthase/homocitrate synthase family. LeuA type 2 subfamily. Homodimer. The cofactor is Mg(2+).

The protein localises to the cytoplasm. The catalysed reaction is 3-methyl-2-oxobutanoate + acetyl-CoA + H2O = (2S)-2-isopropylmalate + CoA + H(+). Its pathway is amino-acid biosynthesis; L-leucine biosynthesis; L-leucine from 3-methyl-2-oxobutanoate: step 1/4. In terms of biological role, catalyzes the condensation of the acetyl group of acetyl-CoA with 3-methyl-2-oxobutanoate (2-ketoisovalerate) to form 3-carboxy-3-hydroxy-4-methylpentanoate (2-isopropylmalate). In Corynebacterium glutamicum (strain R), this protein is 2-isopropylmalate synthase.